The following is a 464-amino-acid chain: MKRKKTVLHHILAEKQKFEKRKEGGSMSAKDEFGTTKYVIYAEFEANGIVERPDVVGAIFGQTEGLLGDDLDLRELQKTGRIGRIRVEVHAKAGKTYGTITVPSSLDRVETAILAAALETIDRVGPAEAKIKVLRIEDVRATKRKYIIERAKEILETLMEQEIPETQELTEEVKKAVRAKELIEYGPEKLPAGPHVPFSDSIIVVEGRADVLNLLKHGIKNAIAVEGTSVPETIIKLSKERIVTAFTDGDRGGELILKELLQVADVDYVARAPEGKEVEELTKKEIVKALRSKVPAEQVITEIFYKGRNFYEVIKEKERAKNGREEKVREVKPPAPAPAPAPAPKPIEKPEPKEREEKIVKPIQQPRPSELDEFGEFIEKVKSSKDSMALLLDKDKSVIAEIPVRELTNQLKERKDVYAVVFNGVITQRLIDTVSESGVKYLVGARKYNVVRRPVNLKIVTFAE.

In terms of domain architecture, Toprim spans 200–274 (DSIIVVEGRA…DVDYVARAPE (75 aa)). Positions 206, 248, and 250 each coordinate Mg(2+). Residues 322–332 (NGREEKVREVK) show a composition bias toward basic and acidic residues. The segment at 322-359 (NGREEKVREVKPPAPAPAPAPAPKPIEKPEPKEREEKI) is disordered. A compositionally biased stretch (pro residues) spans 333–345 (PPAPAPAPAPAPK). Basic and acidic residues predominate over residues 346–359 (PIEKPEPKEREEKI).

The protein belongs to the archaeal DnaG primase family. As to quaternary structure, forms a ternary complex with MCM helicase and DNA. Component of the archaeal exosome complex. Mg(2+) is required as a cofactor.

The catalysed reaction is ssDNA + n NTP = ssDNA/pppN(pN)n-1 hybrid + (n-1) diphosphate.. In terms of biological role, RNA polymerase that catalyzes the synthesis of short RNA molecules used as primers for DNA polymerase during DNA replication. Also part of the exosome, which is a complex involved in RNA degradation. Acts as a poly(A)-binding protein that enhances the interaction between heteromeric, adenine-rich transcripts and the exosome. The sequence is that of DNA primase DnaG from Thermococcus onnurineus (strain NA1).